The sequence spans 152 residues: Small ribosomal subunit protein uS19 (152 aa).

Belongs to the universal ribosomal protein uS19 family.

The chain is Small ribosomal subunit protein uS19 (RPS15) from Podospora anserina (Pleurage anserina).